Reading from the N-terminus, the 488-residue chain is Rhamnulokinase (488 aa).

13–17 is an ATP binding site; sequence ASSGR. Residues Cys68 and Cys222 are joined by a disulfide bond. Substrate is bound by residues Gly83 and 236–238; that span reads HDT. The Proton acceptor role is filled by Asp237. Thr259 contributes to the ATP binding site. Asn296 lines the substrate pocket. Gln304 contacts ATP. Cys353 and Cys370 are oxidised to a cystine. Gly402 provides a ligand contact to ATP. Cys413 and Cys417 are disulfide-bonded.

This sequence belongs to the rhamnulokinase family. Mg(2+) is required as a cofactor.

It catalyses the reaction L-rhamnulose + ATP = L-rhamnulose 1-phosphate + ADP + H(+). It functions in the pathway carbohydrate degradation; L-rhamnose degradation; glycerone phosphate from L-rhamnose: step 2/3. Its function is as follows. Involved in the catabolism of L-rhamnose (6-deoxy-L-mannose). Catalyzes the transfer of the gamma-phosphate group from ATP to the 1-hydroxyl group of L-rhamnulose to yield L-rhamnulose 1-phosphate. The polypeptide is Rhamnulokinase (Klebsiella pneumoniae subsp. pneumoniae (strain ATCC 700721 / MGH 78578)).